Here is an 81-residue protein sequence, read N- to C-terminus: MTMSLEVFEKLESKVQQAIDTITLLQMEIEELKEKNNALAQEVHSAQNGREELERENQQLREQQNGWQDRLQALLGRMEEV.

Residues 5-81 (LEVFEKLESK…QALLGRMEEV (77 aa)) are a coiled coil. Residues 43–64 (VHSAQNGREELERENQQLREQQ) form a disordered region. Over residues 49-59 (GREELERENQQ) the composition is skewed to basic and acidic residues.

The protein belongs to the ZapB family. As to quaternary structure, homodimer. The ends of the coiled-coil dimer bind to each other, forming polymers. Interacts with FtsZ.

It is found in the cytoplasm. In terms of biological role, non-essential, abundant cell division factor that is required for proper Z-ring formation. It is recruited early to the divisome by direct interaction with FtsZ, stimulating Z-ring assembly and thereby promoting cell division earlier in the cell cycle. Its recruitment to the Z-ring requires functional FtsA or ZipA. The polypeptide is Cell division protein ZapB (Enterobacter sp. (strain 638)).